An 83-amino-acid polypeptide reads, in one-letter code: Large ribosomal subunit protein eL14 (83 aa).

It belongs to the eukaryotic ribosomal protein eL14 family.

The polypeptide is Large ribosomal subunit protein eL14 (Thermococcus gammatolerans (strain DSM 15229 / JCM 11827 / EJ3)).